A 720-amino-acid chain; its full sequence is Methionine--tRNA ligase (720 aa).

Residues 27–37 (PYANGQIHIGH) carry the 'HIGH' region motif. Zn(2+) is bound by residues C158, C161, C171, and C174. The short motif at 348-352 (KMSKS) is the 'KMSKS' region element. K351 lines the ATP pocket. Residues 614 to 720 (DFAKIDLRIA…SGAKPGMRVK (107 aa)) form the tRNA-binding domain.

Belongs to the class-I aminoacyl-tRNA synthetase family. MetG type 1 subfamily. In terms of assembly, homodimer. Zn(2+) is required as a cofactor.

The protein resides in the cytoplasm. The catalysed reaction is tRNA(Met) + L-methionine + ATP = L-methionyl-tRNA(Met) + AMP + diphosphate. Is required not only for elongation of protein synthesis but also for the initiation of all mRNA translation through initiator tRNA(fMet) aminoacylation. This chain is Methionine--tRNA ligase, found in Burkholderia lata (strain ATCC 17760 / DSM 23089 / LMG 22485 / NCIMB 9086 / R18194 / 383).